The chain runs to 266 residues: NADP-dependent mannitol dehydrogenase (266 aa).

Residues Asn-107 and Lys-140 each coordinate NADP(+). Catalysis depends on Ser-159, which acts as the Proton donor. NADP(+) is bound by residues Tyr-174, Lys-178, Ile-206, and Thr-208. Tyr-174 serves as the catalytic Proton acceptor. The Lowers pKa of active site Tyr role is filled by Lys-178.

It belongs to the short-chain dehydrogenases/reductases (SDR) family. In terms of assembly, homotetramer.

It catalyses the reaction D-mannitol + NADP(+) = D-fructose + NADPH + H(+). Catalyzes the interconversion between D-mannitol and D-fructose. Plays a key role in liamocins biosynthesis by providing the mannitol moity that is linked to 3,5-dihydroxydecanoic acid (provided by the HR-PKS PKS1) via ester bond formation catalyzed by the esterase EST1. This chain is NADP-dependent mannitol dehydrogenase, found in Aureobasidium melanogenum (Aureobasidium pullulans var. melanogenum).